The sequence spans 579 residues: Glypican-3 (579 aa).

A signal peptide spans 1 to 24 (MAGTVRTACLLVAMLLGLGCLGQA). At Gln-25 the chain carries Pyrrolidone carboxylic acid. 7 cysteine pairs are disulfide-bonded: Cys-34/Cys-71, Cys-64/Cys-261, Cys-72/Cys-264, Cys-196/Cys-348, Cys-251/Cys-284, Cys-273/Cys-421, and Cys-277/Cys-409. N-linked (GlcNAc...) asparagine glycosylation is found at Asn-123 and Asn-240. Residue Ser-351 is modified to Phosphoserine. Asn-417 carries an N-linked (GlcNAc...) asparagine glycan. O-linked (Xyl...) (glycosaminoglycan) serine glycosylation is found at Ser-494 and Ser-508. Positions 533–552 (DAPGNKQHGNQKDNEITTSH) are disordered. Residue Ser-553 is the site of GPI-anchor amidated serine attachment. A propeptide spans 554 to 579 (VGNMPSPLKILISVAIYVACFFFLVH) (removed in mature form).

This sequence belongs to the glypican family. As to quaternary structure, heterodimer; disulfide-linked. Cleavage by a furin-like convertase results in production of alpha and beta chains which form a disulfide-linked heterodimer. Interacts with DPP4. Interacts with FGF2. Interacts with WNT5A. Also interacts with WNT3A and WNT7B. Interacts with hedgehog protein SHH; the heparan sulfate chains are not required for the interaction. Also interacts with hedgehog protein IHH. Interacts with CD81. Interacts with Wnt receptors FZD4, FZD7 and FZD8; the heparan sulfate chains are required for the interaction. Post-translationally, O-glycosylated; contains heparan sulfate and/or chondroitin sulfate. Cleaved intracellularly by a furin-like convertase to generate 2 subunits, alpha and beta, which remain associated through disulfide bonds and are associated with the cell surface via the GPI-anchor. This processing is essential for its role in inhibition of hedgehog signaling. A second proteolytic event may result in cleavage of the protein on the cell surface, separating it from the GPI-anchor and leading to its shedding from the cell surface. In the developing limb, absent from the apical epidermal ridge at 11 dpc but highly expressed in the underlying mesenchyme. Expression in the mesenchyme at this stage is asymmetric with highest levels in the regions of the distal mesenchyme within the progress zone and within the proximal anterior and posterior limb bud. At later developmental stages including 12.5 and 13.5 dpc, expression is restricted to the interdigital webs and the regions of chondrocytic differentiation of the developing bones. In the embryonic kidney, expressed in both the ureteric bud and mesenchymal cells as early as 13.5 dpc. Expression at 16.5 dpc is similar to that at 13.5 dpc but decreases by 18.5 dpc.

Its subcellular location is the cell membrane. Cell surface proteoglycan. Negatively regulates the hedgehog signaling pathway when attached via the GPI-anchor to the cell surface by competing with the hedgehog receptor PTC1 for binding to hedgehog proteins. Binding to the hedgehog protein SHH triggers internalization of the complex by endocytosis and its subsequent lysosomal degradation. Positively regulates the canonical Wnt signaling pathway by binding to the Wnt receptor Frizzled and stimulating the binding of the Frizzled receptor to Wnt ligands. Positively regulates the non-canonical Wnt signaling pathway. Binds to CD81 which decreases the availability of free CD81 for binding to the transcriptional repressor HHEX, resulting in nuclear translocation of HHEX and transcriptional repression. Inhibits the dipeptidyl peptidase activity of DPP4. Plays a role in limb patterning and skeletal development by controlling the cellular response to BMP4. Modulates the effects of growth factors BMP2, BMP7 and FGF7 on renal branching morphogenesis. Required for coronary vascular development. Plays a role in regulating cell movements during gastrulation. This Mus musculus (Mouse) protein is Glypican-3 (Gpc3).